The chain runs to 158 residues: Cyclic pyranopterin monophosphate synthase (158 aa).

Substrate-binding positions include Met74 to His76 and Met112 to Glu113. Residue Asp127 is part of the active site.

This sequence belongs to the MoaC family. In terms of assembly, homohexamer; trimer of dimers.

The enzyme catalyses (8S)-3',8-cyclo-7,8-dihydroguanosine 5'-triphosphate = cyclic pyranopterin phosphate + diphosphate. Its pathway is cofactor biosynthesis; molybdopterin biosynthesis. Its function is as follows. Catalyzes the conversion of (8S)-3',8-cyclo-7,8-dihydroguanosine 5'-triphosphate to cyclic pyranopterin monophosphate (cPMP). This is Cyclic pyranopterin monophosphate synthase from Thermoanaerobacter pseudethanolicus (strain ATCC 33223 / 39E) (Clostridium thermohydrosulfuricum).